Here is an 861-residue protein sequence, read N- to C-terminus: Transcription factor opdJ (861 aa).

The zn(2)-C6 fungal-type DNA-binding region spans 11–37; that stretch reads CSHCSKAKARCDRKVPCSRCVSKQLVC.

The protein localises to the nucleus. Transcription factor that positively regulates the gene cluster that mediates the biosynthesis of oxopyrrolidines, polyketide-amino acid hybrid compounds with feature structures of tetramic acid. In Penicillium oxalicum (strain 114-2 / CGMCC 5302) (Penicillium decumbens), this protein is Transcription factor opdJ.